The primary structure comprises 195 residues: Calcineurin B homologous protein 1 (195 aa).

The N-myristoyl glycine moiety is linked to residue Gly-2. EF-hand domains lie at 26 to 61, 66 to 101, 110 to 145, and 151 to 186; these read SQITRLYSRFTSLDKGENGTLSREDFQRIPELAINP, IINAFFSEGEDQVNFRGFMRTLAHFRPIEDNEKSKD, SRSNKLHFAFRLYDLDKDDKISRDELLQVLRMMVGV, and QLGSIADRTIQEADQDGDCAISFAEFVKVLEKVDVE. Positions 123, 125, 127, 129, 134, 164, 166, 168, and 175 each coordinate Ca(2+).

Belongs to the calcineurin regulatory subunit family. CHP subfamily. As to quaternary structure, monomer. Post-translationally, phosphorylated. In terms of processing, calcium-binding or N-myristoylation are necessary for the Na(+)/H(+) exchange activities.

It is found in the nucleus. The protein resides in the cytoplasm. The protein localises to the cytoskeleton. Its subcellular location is the endomembrane system. It localises to the endoplasmic reticulum-Golgi intermediate compartment. It is found in the endoplasmic reticulum. The protein resides in the cell membrane. The protein localises to the membrane. Calcium-binding protein involved in different processes such as regulation of vesicular trafficking, plasma membrane Na(+)/H(+) exchanger and gene transcription. Involved in the constitutive exocytic membrane traffic. Mediates the association between microtubules and membrane-bound organelles of the endoplasmic reticulum and Golgi apparatus and is also required for the targeting and fusion of transcytotic vesicles (TCV) with the plasma membrane. Functions as an integral cofactor in cell pH regulation by controlling plasma membrane-type Na(+)/H(+) exchange activity. Inhibits serum- and GTPase-stimulated Na(+)/H(+) exchange. Plays a role as an inhibitor of ribosomal RNA transcription. Acts as a negative regulator of the calcineurin/NFAT signaling pathway. The protein is Calcineurin B homologous protein 1 (CHP1) of Gallus gallus (Chicken).